The following is a 307-amino-acid chain: Ribosomal RNA small subunit methyltransferase H (307 aa).

S-adenosyl-L-methionine contacts are provided by residues 33–35, D51, F82, D96, and Q103; that span reads GGY.

This sequence belongs to the methyltransferase superfamily. RsmH family.

It localises to the cytoplasm. It catalyses the reaction cytidine(1402) in 16S rRNA + S-adenosyl-L-methionine = N(4)-methylcytidine(1402) in 16S rRNA + S-adenosyl-L-homocysteine + H(+). In terms of biological role, specifically methylates the N4 position of cytidine in position 1402 (C1402) of 16S rRNA. This chain is Ribosomal RNA small subunit methyltransferase H, found in Rickettsia massiliae (strain Mtu5).